The following is a 234-amino-acid chain: Carboxy-S-adenosyl-L-methionine synthase (234 aa).

Residues tyrosine 35, glycine 60–serine 62, aspartate 109–isoleucine 110, asparagine 124, and arginine 191 contribute to the S-adenosyl-L-methionine site.

Belongs to the class I-like SAM-binding methyltransferase superfamily. Cx-SAM synthase family. In terms of assembly, homodimer.

It catalyses the reaction prephenate + S-adenosyl-L-methionine = carboxy-S-adenosyl-L-methionine + 3-phenylpyruvate + H2O. Its function is as follows. Catalyzes the conversion of S-adenosyl-L-methionine (SAM) to carboxy-S-adenosyl-L-methionine (Cx-SAM). The polypeptide is Carboxy-S-adenosyl-L-methionine synthase (Campylobacter fetus subsp. fetus (strain 82-40)).